A 122-amino-acid polypeptide reads, in one-letter code: Acidic phospholipase A2 2 (122 aa).

7 disulfides stabilise this stretch: Cys-26/Cys-115, Cys-28/Cys-44, Cys-43/Cys-95, Cys-49/Cys-122, Cys-50/Cys-88, Cys-57/Cys-81, and Cys-75/Cys-86. 3 residues coordinate Ca(2+): Tyr-27, Gly-29, and Gly-31. His-47 is a catalytic residue. A Ca(2+)-binding site is contributed by Asp-48. Residue Asp-89 is part of the active site.

This sequence belongs to the phospholipase A2 family. Group II subfamily. D49 sub-subfamily. The cofactor is Ca(2+). In terms of tissue distribution, expressed by the venom gland.

It is found in the secreted. The catalysed reaction is a 1,2-diacyl-sn-glycero-3-phosphocholine + H2O = a 1-acyl-sn-glycero-3-phosphocholine + a fatty acid + H(+). Its function is as follows. Snake venom phospholipase A2 (PLA2) that has high lipolytic activity. PLA2 catalyzes the calcium-dependent hydrolysis of the 2-acyl groups in 3-sn-phosphoglycerides. The polypeptide is Acidic phospholipase A2 2 (Craspedocephalus gramineus (Bamboo pit viper)).